The following is a 242-amino-acid chain: Biosynthetic peptidoglycan transglycosylase (242 aa).

A helical membrane pass occupies residues 21–41; it reads VALVVFWGGGIALFSVVPVPF.

It belongs to the glycosyltransferase 51 family.

The protein resides in the cell inner membrane. The enzyme catalyses [GlcNAc-(1-&gt;4)-Mur2Ac(oyl-L-Ala-gamma-D-Glu-L-Lys-D-Ala-D-Ala)](n)-di-trans,octa-cis-undecaprenyl diphosphate + beta-D-GlcNAc-(1-&gt;4)-Mur2Ac(oyl-L-Ala-gamma-D-Glu-L-Lys-D-Ala-D-Ala)-di-trans,octa-cis-undecaprenyl diphosphate = [GlcNAc-(1-&gt;4)-Mur2Ac(oyl-L-Ala-gamma-D-Glu-L-Lys-D-Ala-D-Ala)](n+1)-di-trans,octa-cis-undecaprenyl diphosphate + di-trans,octa-cis-undecaprenyl diphosphate + H(+). Its pathway is cell wall biogenesis; peptidoglycan biosynthesis. Its function is as follows. Peptidoglycan polymerase that catalyzes glycan chain elongation from lipid-linked precursors. The protein is Biosynthetic peptidoglycan transglycosylase of Salmonella arizonae (strain ATCC BAA-731 / CDC346-86 / RSK2980).